The following is a 122-amino-acid chain: Large-conductance mechanosensitive channel (122 aa).

Helical transmembrane passes span 29 to 49 and 66 to 86; these read FGKI…GLIF and GVFI…FLFI.

Belongs to the MscL family. Homopentamer.

It localises to the cell membrane. Its function is as follows. Channel that opens in response to stretch forces in the membrane lipid bilayer. May participate in the regulation of osmotic pressure changes within the cell. The polypeptide is Large-conductance mechanosensitive channel (Macrococcus caseolyticus (strain JCSC5402) (Macrococcoides caseolyticum)).